We begin with the raw amino-acid sequence, 467 residues long: Asparagine--tRNA ligase (467 aa).

It belongs to the class-II aminoacyl-tRNA synthetase family. In terms of assembly, homodimer.

Its subcellular location is the cytoplasm. The enzyme catalyses tRNA(Asn) + L-asparagine + ATP = L-asparaginyl-tRNA(Asn) + AMP + diphosphate + H(+). This chain is Asparagine--tRNA ligase, found in Haemophilus ducreyi (strain 35000HP / ATCC 700724).